Consider the following 308-residue polypeptide: Malonate utilization transcriptional regulator (308 aa).

The HTH lysR-type domain occupies 9–66; that stretch reads ITFRKLSVFMMFMAKGNIARTAEAMKLSSVSVHRALHTLEEGVGCPLFVHKGRNLLPL. Residues 26–45 constitute a DNA-binding region (H-T-H motif); that stretch reads IARTAEAMKLSSVSVHRALH.

This sequence belongs to the LysR transcriptional regulatory family.

Functionally, transcriptional regulator of the mau genes for malonate utilization. This chain is Malonate utilization transcriptional regulator (mauR), found in Klebsiella pneumoniae.